Reading from the N-terminus, the 352-residue chain is Extracellular minor metalloprotease (352 aa).

Disordered regions lie at residues 41–86 (GNKP…QPRR) and 144–164 (TARSSTVSPSPSTLVGHELTH). Residues 48 to 57 (PTEKNARAGE) show a composition bias toward basic and acidic residues. Low complexity-rich tracts occupy residues 71–85 (ARQTGAQGGAAQQPR) and 144–156 (TARSSTVSPSPST). His-160 contributes to the Zn(2+) binding site. Glu-161 is a catalytic residue. Residues His-164 and Glu-184 each contribute to the Zn(2+) site. His-262 (proton donor) is an active-site residue. The segment at 303 to 325 (TPTSDHLRPRHGETRAGLRTKRG) is disordered. The span at 304 to 325 (PTSDHLRPRHGETRAGLRTKRG) shows a compositional bias: basic and acidic residues.

Belongs to the peptidase M4 family. It depends on Zn(2+) as a cofactor.

The protein resides in the secreted. This Serratia marcescens (strain ATCC 21074 / E-15) protein is Extracellular minor metalloprotease (smp).